The following is a 257-amino-acid chain: MLSKRIIPCLDVKDGVVVKGVQFRNHEVMGGIVELARRYAEEGADELVFYDITASSDARVVDKSWVSRVAEVIDIPFCVAGGIKSVEDARQILEFGADKVSINSPALADPGLITRLAERFGVQCVVVGIDSYFDADTGHYQVKQFTGDESRTRTTAWHTLDWVQEAQKRGAGEIVLNVMNQDGMRQGYDLEQLKLVRAVCKVPLIASGGAGAMEHFRDAFTLADVDGALAASVFHKGLIPIPELKRWLKNEGVAIRE.

Catalysis depends on residues D11 and D130.

This sequence belongs to the HisA/HisF family. In terms of assembly, heterodimer of HisH and HisF.

Its subcellular location is the cytoplasm. The enzyme catalyses 5-[(5-phospho-1-deoxy-D-ribulos-1-ylimino)methylamino]-1-(5-phospho-beta-D-ribosyl)imidazole-4-carboxamide + L-glutamine = D-erythro-1-(imidazol-4-yl)glycerol 3-phosphate + 5-amino-1-(5-phospho-beta-D-ribosyl)imidazole-4-carboxamide + L-glutamate + H(+). Its pathway is amino-acid biosynthesis; L-histidine biosynthesis; L-histidine from 5-phospho-alpha-D-ribose 1-diphosphate: step 5/9. Functionally, IGPS catalyzes the conversion of PRFAR and glutamine to IGP, AICAR and glutamate. The HisF subunit catalyzes the cyclization activity that produces IGP and AICAR from PRFAR using the ammonia provided by the HisH subunit. The sequence is that of Imidazole glycerol phosphate synthase subunit HisF from Aeromonas salmonicida (strain A449).